Here is a 427-residue protein sequence, read N- to C-terminus: Diaminobutyrate--2-oxoglutarate transaminase (427 aa).

At Lys-269 the chain carries N6-(pyridoxal phosphate)lysine.

This sequence belongs to the class-III pyridoxal-phosphate-dependent aminotransferase family. Requires pyridoxal 5'-phosphate as cofactor.

The enzyme catalyses L-2,4-diaminobutanoate + 2-oxoglutarate = L-aspartate 4-semialdehyde + L-glutamate. It participates in amine and polyamine biosynthesis; ectoine biosynthesis; L-ectoine from L-aspartate 4-semialdehyde: step 1/3. Its function is as follows. Catalyzes reversively the conversion of L-aspartate beta-semialdehyde (ASA) to L-2,4-diaminobutyrate (DABA) by transamination with L-glutamate. The chain is Diaminobutyrate--2-oxoglutarate transaminase (ectB) from Marinococcus halophilus.